The following is an 826-amino-acid chain: G-protein coupled receptor-associated sorting protein 2 (826 aa).

4 disordered regions span residues 1 to 126, 204 to 286, 336 to 371, and 506 to 534; these read MTGA…AQAW, WCYP…NPFC, EGNR…QESR, and IPEG…DSVA. Positions 13-31 are enriched in basic and acidic residues; that stretch reads KPDKKPQEEVAGGAERESE. The segment covering 59-73 has biased composition (polar residues); the sequence is SSRARPKTETQSVSG. Positions 231–247 are enriched in basic and acidic residues; it reads TREETSIRSWPREEVNT. Residues 248 to 264 show a composition bias toward basic residues; sequence RSRHRAKHQTNARSKPR. 2 positions are modified to phosphoserine: Ser-275 and Ser-277.

The protein belongs to the GPRASP family. In terms of assembly, interacts with cytoplasmic tails of a variety of G-protein coupled receptors such as muscarinic acetylcholine receptor M1/CHRM1 and calcitonin receptor/CALCR. Strongly expressed in the brain and the cochlea. Also in lung and muscle tissues. Localized in multiple structures of the cochlea, detected in the spiral ganglion, stria vascularis, spiral ligament, inner and outer hair cells.

In terms of biological role, may play a role in regulation of a variety of G-protein coupled receptors. In Mus musculus (Mouse), this protein is G-protein coupled receptor-associated sorting protein 2 (Gprasp2).